We begin with the raw amino-acid sequence, 102 residues long: Large ribosomal subunit protein bL21 (102 aa).

This sequence belongs to the bacterial ribosomal protein bL21 family. In terms of assembly, part of the 50S ribosomal subunit. Contacts protein L20.

Functionally, this protein binds to 23S rRNA in the presence of protein L20. The polypeptide is Large ribosomal subunit protein bL21 (Macrococcus caseolyticus (strain JCSC5402) (Macrococcoides caseolyticum)).